Reading from the N-terminus, the 363-residue chain is Pyrimidine monooxygenase RutA (363 aa).

Residues 49–50, N115, E124, 140–141, and S190 contribute to the FMN site; these read IK and RY.

Belongs to the NtaA/SnaA/DszA monooxygenase family. RutA subfamily.

It catalyses the reaction uracil + FMNH2 + NADH + O2 = (Z)-3-ureidoacrylate + FMN + NAD(+) + H2O + H(+). It carries out the reaction thymine + FMNH2 + NADH + O2 = (Z)-2-methylureidoacrylate + FMN + NAD(+) + H2O + H(+). Catalyzes the pyrimidine ring opening between N-3 and C-4 by an unusual flavin hydroperoxide-catalyzed mechanism, adding oxygen atoms in the process to yield ureidoacrylate peracid, that immediately reacts with FMN forming ureidoacrylate and FMN-N(5)-oxide. The FMN-N(5)-oxide reacts spontaneously with NADH to produce FMN. Requires the flavin reductase RutF to regenerate FMN in vivo. The chain is Pyrimidine monooxygenase RutA from Klebsiella variicola (strain At-22).